The sequence spans 270 residues: NAD kinase (270 aa).

The active-site Proton acceptor is the Asp-49. NAD(+) contacts are provided by residues 49 to 50, Arg-54, 126 to 127, Arg-152, Asp-154, 165 to 170, Ala-189, and Gln-227; these read DG, NE, and TAYNKS.

It belongs to the NAD kinase family. The cofactor is a divalent metal cation.

It localises to the cytoplasm. It carries out the reaction NAD(+) + ATP = ADP + NADP(+) + H(+). Involved in the regulation of the intracellular balance of NAD and NADP, and is a key enzyme in the biosynthesis of NADP. Catalyzes specifically the phosphorylation on 2'-hydroxyl of the adenosine moiety of NAD to yield NADP. This is NAD kinase from Lactococcus lactis subsp. lactis (strain IL1403) (Streptococcus lactis).